A 459-amino-acid polypeptide reads, in one-letter code: Cysteine--tRNA ligase (459 aa).

Cys-29 serves as a coordination point for Zn(2+). Positions 31-41 (PTVYDRAHIGN) match the 'HIGH' region motif. Zn(2+)-binding residues include Cys-209, His-234, and Glu-238. The short motif at 267 to 271 (KMSKS) is the 'KMSKS' region element. Lys-270 contributes to the ATP binding site.

It belongs to the class-I aminoacyl-tRNA synthetase family. Monomer. Zn(2+) is required as a cofactor.

Its subcellular location is the cytoplasm. The catalysed reaction is tRNA(Cys) + L-cysteine + ATP = L-cysteinyl-tRNA(Cys) + AMP + diphosphate. In Rhodospirillum rubrum (strain ATCC 11170 / ATH 1.1.1 / DSM 467 / LMG 4362 / NCIMB 8255 / S1), this protein is Cysteine--tRNA ligase.